We begin with the raw amino-acid sequence, 331 residues long: 3-dehydroquinate synthase homolog (331 aa).

This sequence belongs to the archaeal-type DHQ synthase family.

This Persephonella marina (strain DSM 14350 / EX-H1) protein is 3-dehydroquinate synthase homolog.